The following is a 500-amino-acid chain: Histidine--tRNA ligase (500 aa).

Belongs to the class-II aminoacyl-tRNA synthetase family. Homodimer.

The protein localises to the cytoplasm. The enzyme catalyses tRNA(His) + L-histidine + ATP = L-histidyl-tRNA(His) + AMP + diphosphate + H(+). This Ruegeria sp. (strain TM1040) (Silicibacter sp.) protein is Histidine--tRNA ligase.